A 312-amino-acid polypeptide reads, in one-letter code: Ribonuclease HIII (312 aa).

One can recognise an RNase H type-2 domain in the interval 95–311; it reads FNCIGSDEAG…REKAQKILKP (217 aa). Positions 101, 102, and 206 each coordinate a divalent metal cation.

It belongs to the RNase HII family. RnhC subfamily. It depends on Mn(2+) as a cofactor. The cofactor is Mg(2+).

The protein resides in the cytoplasm. The enzyme catalyses Endonucleolytic cleavage to 5'-phosphomonoester.. Endonuclease that specifically degrades the RNA of RNA-DNA hybrids. This is Ribonuclease HIII from Staphylococcus aureus (strain USA300).